The following is a 229-amino-acid chain: Demethylmenaquinone methyltransferase (229 aa).

Residues threonine 62, aspartate 80, 100 to 101, and serine 117 each bind S-adenosyl-L-methionine; that span reads DG.

Belongs to the class I-like SAM-binding methyltransferase superfamily. MenG/UbiE family.

It catalyses the reaction a 2-demethylmenaquinol + S-adenosyl-L-methionine = a menaquinol + S-adenosyl-L-homocysteine + H(+). Its pathway is quinol/quinone metabolism; menaquinone biosynthesis; menaquinol from 1,4-dihydroxy-2-naphthoate: step 2/2. In terms of biological role, methyltransferase required for the conversion of demethylmenaquinol (DMKH2) to menaquinol (MKH2). In Corynebacterium kroppenstedtii (strain DSM 44385 / JCM 11950 / CIP 105744 / CCUG 35717), this protein is Demethylmenaquinone methyltransferase.